Reading from the N-terminus, the 411-residue chain is LL-diaminopimelate aminotransferase (411 aa).

The substrate site is built by Y15 and G42. Residues Y72, 105–106 (SK), Y129, N186, Y217, and 245–247 (SFS) contribute to the pyridoxal 5'-phosphate site. Residues K106, Y129, and N186 each contribute to the substrate site. At K248 the chain carries N6-(pyridoxal phosphate)lysine. 2 residues coordinate pyridoxal 5'-phosphate: R256 and N287. Substrate is bound by residues N287 and R382.

This sequence belongs to the class-I pyridoxal-phosphate-dependent aminotransferase family. LL-diaminopimelate aminotransferase subfamily. As to quaternary structure, homodimer. Requires pyridoxal 5'-phosphate as cofactor.

The enzyme catalyses (2S,6S)-2,6-diaminopimelate + 2-oxoglutarate = (S)-2,3,4,5-tetrahydrodipicolinate + L-glutamate + H2O + H(+). It functions in the pathway amino-acid biosynthesis; L-lysine biosynthesis via DAP pathway; LL-2,6-diaminopimelate from (S)-tetrahydrodipicolinate (aminotransferase route): step 1/1. In terms of biological role, involved in the synthesis of meso-diaminopimelate (m-DAP or DL-DAP), required for both lysine and peptidoglycan biosynthesis. Catalyzes the direct conversion of tetrahydrodipicolinate to LL-diaminopimelate. Is also able to use meso-diaminopimelate, lysine or ornithine as substrates. The chain is LL-diaminopimelate aminotransferase from Protochlamydia amoebophila (strain UWE25).